Consider the following 864-residue polypeptide: Probable beta-glucosidase J (864 aa).

Asp233 is a catalytic residue. Positions 411–578 (TGEPGYTFRV…DTDAAIQQAV (168 aa)) constitute a PA14 domain. N-linked (GlcNAc...) asparagine glycans are attached at residues Asn434, Asn447, and Asn503.

It belongs to the glycosyl hydrolase 3 family.

Its subcellular location is the secreted. It catalyses the reaction Hydrolysis of terminal, non-reducing beta-D-glucosyl residues with release of beta-D-glucose.. It functions in the pathway glycan metabolism; cellulose degradation. Beta-glucosidases are one of a number of cellulolytic enzymes involved in the degradation of cellulosic biomass. Catalyzes the last step releasing glucose from the inhibitory cellobiose. The sequence is that of Probable beta-glucosidase J (bglJ) from Neosartorya fischeri (strain ATCC 1020 / DSM 3700 / CBS 544.65 / FGSC A1164 / JCM 1740 / NRRL 181 / WB 181) (Aspergillus fischerianus).